We begin with the raw amino-acid sequence, 377 residues long: Nitric oxide reductase FlRd-NAD(+) reductase (377 aa).

The protein belongs to the FAD-dependent oxidoreductase family. The cofactor is FAD.

Its subcellular location is the cytoplasm. It catalyses the reaction 2 reduced [nitric oxide reductase rubredoxin domain] + NAD(+) + H(+) = 2 oxidized [nitric oxide reductase rubredoxin domain] + NADH. It participates in nitrogen metabolism; nitric oxide reduction. One of at least two accessory proteins for anaerobic nitric oxide (NO) reductase. Reduces the rubredoxin moiety of NO reductase. The protein is Nitric oxide reductase FlRd-NAD(+) reductase (norW) of Shigella boydii serotype 4 (strain Sb227).